Consider the following 136-residue polypeptide: Large ribosomal subunit protein bL12 (136 aa).

This sequence belongs to the bacterial ribosomal protein bL12 family. As to quaternary structure, homodimer. Part of the ribosomal stalk of the 50S ribosomal subunit. Forms a multimeric L10(L12)X complex, where L10 forms an elongated spine to which 2 to 4 L12 dimers bind in a sequential fashion. Binds GTP-bound translation factors.

Its function is as follows. Forms part of the ribosomal stalk which helps the ribosome interact with GTP-bound translation factors. Is thus essential for accurate translation. The polypeptide is Large ribosomal subunit protein bL12 (Synechococcus sp. (strain JA-2-3B'a(2-13)) (Cyanobacteria bacterium Yellowstone B-Prime)).